Reading from the N-terminus, the 181-residue chain is Protein Syd (181 aa).

This sequence belongs to the Syd family.

Its subcellular location is the cell inner membrane. In terms of biological role, interacts with the SecY protein in vivo. May bind preferentially to an uncomplexed state of SecY, thus functioning either as a chelating agent for excess SecY in the cell or as a regulatory factor that negatively controls the translocase function. This chain is Protein Syd, found in Salmonella agona (strain SL483).